Consider the following 510-residue polypeptide: GMP synthase [glutamine-hydrolyzing] (510 aa).

In terms of domain architecture, Glutamine amidotransferase type-1 spans 5–195 (KILVLDFGGQ…LFKVCGVKGT (191 aa)). Cys-82 acts as the Nucleophile in catalysis. Active-site residues include His-169 and Glu-171. The GMPS ATP-PPase domain occupies 196–385 (WNMADFINEE…LGLPDEIVWR (190 aa)). 223-229 (SGGVDSA) contacts ATP.

In terms of assembly, homodimer.

The catalysed reaction is XMP + L-glutamine + ATP + H2O = GMP + L-glutamate + AMP + diphosphate + 2 H(+). The protein operates within purine metabolism; GMP biosynthesis; GMP from XMP (L-Gln route): step 1/1. Functionally, catalyzes the synthesis of GMP from XMP. The sequence is that of GMP synthase [glutamine-hydrolyzing] from Halothermothrix orenii (strain H 168 / OCM 544 / DSM 9562).